A 107-amino-acid chain; its full sequence is uncharacterized protein (107 aa).

Residues 87-107 (KNRNGPKAEKRRPYVRAHAKW) form a disordered region.

This is an uncharacterized protein from Saccharomyces cerevisiae (strain ATCC 204508 / S288c) (Baker's yeast).